The sequence spans 542 residues: Neutral amino acid transporter B(0) (542 aa).

Met1 is subject to N-acetylmethionine. The Cytoplasmic portion of the chain corresponds to 1-52 (MVADPPRGDSKGLAAAEPTANGGLALASIEDQGEAAGGCCGSRDRVRRCLRA). Residues 53–82 (NLLVLLTVVAVVVGVALGLGVSGAGGALAL) form a helical membrane-spanning segment. The Extracellular portion of the chain corresponds to 83–95 (GPERLSAFVFPGE). A helical membrane pass occupies residues 96 to 117 (LLLRLLRMIILPLVVCSLIGGA). Over 118–131 (ASLDPGALGRLGAW) the chain is Cytoplasmic. The helical transmembrane segment at 132-154 (ALLFFLVTTLLASALGVALALAL) threads the bilayer. Residues 155-225 (QPGAASAAIN…GTRVKVPVGQ (71 aa)) lie on the Extracellular side of the membrane. 2 N-linked (GlcNAc...) asparagine glycosylation sites follow: Asn164 and Asn213. The helical transmembrane segment at 226–249 (EVEGMNILGLVVFAIVFGVALRKL) threads the bilayer. The Cytoplasmic segment spans residues 250–258 (GPEGELLIR). The chain crosses the membrane as a helical span at residues 259–286 (FFNSFNEATMVLVSWIMWYAPVGIMFLV). Topologically, residues 287–307 (AGKIVEMEDVGLLFARLGKYI) are extracellular. The chain crosses the membrane as a helical span at residues 308–329 (LCCLLGHAIHGLLVLPLIYFLF). Residues 330–334 (TRKNP) lie on the Cytoplasmic side of the membrane. The discontinuously helical intramembrane region spans 335–365 (YRFLWGIVTPLATAFGTSSSSATLPLMMKCV). At 366–374 (EENNGVAKH) the chain is on the cytoplasmic side. The chain crosses the membrane as a helical span at residues 375–401 (ISRFILPIGATVNMDGAALFQCVAAVF). Residues Gly383, Thr385, and Asn387 each contribute to the Na(+) site. The Extracellular portion of the chain corresponds to 402-414 (IAQLSEQSLDFVK). Positions 415–448 (IITILVTATASSVGAAGIPAGGVLTLAIILEAVN) form an intramembrane region, discontinuously helical. Over 449-461 (LPVDHISLILAVD) the chain is Extracellular. A helical transmembrane segment spans residues 462-483 (WLVDRSCTVLNVEGDALGAGLL). 2 residues coordinate Na(+): Asn472 and Asp476. The Cytoplasmic portion of the chain corresponds to 484 to 542 (QNYVDRTEVRSTEPELIQVKSELPLDPLPAPTEEGNPLLRHYRGPAGDATVASEKESVM). Ser494 is modified (phosphoserine). Thr495 is modified (phosphothreonine). Phosphoserine occurs at positions 504, 536, and 540. The interval 509–542 (DPLPAPTEEGNPLLRHYRGPAGDATVASEKESVM) is disordered.

It belongs to the dicarboxylate/amino acid:cation symporter (DAACS) (TC 2.A.23) family. SLC1A5 subfamily. As to quaternary structure, homotrimer.

The protein resides in the cell membrane. It is found in the melanosome. It catalyses the reaction L-glutamine(out) + L-serine(in) + Na(+)(out) = L-glutamine(in) + L-serine(out) + Na(+)(in). The enzyme catalyses L-glutamine(in) + L-serine(out) + Na(+)(out) = L-glutamine(out) + L-serine(in) + Na(+)(in). The catalysed reaction is L-threonine(in) + L-glutamine(out) + Na(+)(out) = L-threonine(out) + L-glutamine(in) + Na(+)(in). It carries out the reaction L-threonine(out) + L-glutamine(in) + Na(+)(out) = L-threonine(in) + L-glutamine(out) + Na(+)(in). It catalyses the reaction L-asparagine(in) + L-glutamine(out) + Na(+)(out) = L-asparagine(out) + L-glutamine(in) + Na(+)(in). The enzyme catalyses L-asparagine(out) + L-glutamine(in) + Na(+)(out) = L-asparagine(in) + L-glutamine(out) + Na(+)(in). The catalysed reaction is L-glutamine(in) + L-alanine(out) + Na(+)(out) = L-glutamine(out) + L-alanine(in) + Na(+)(in). It carries out the reaction L-valine(out) + L-glutamine(in) + Na(+)(out) = L-valine(in) + L-glutamine(out) + Na(+)(in). It catalyses the reaction L-glutamine(in) + L-methionine(out) + Na(+)(out) = L-glutamine(out) + L-methionine(in) + Na(+)(in). The enzyme catalyses L-glutamine(in) + L-glutamate(out) + Na(+)(out) + H(+)(out) = L-glutamine(out) + L-glutamate(in) + Na(+)(in) + H(+)(in). The catalysed reaction is D-serine(in) + L-glutamine(out) + Na(+)(out) = D-serine(out) + L-glutamine(in) + Na(+)(in). It carries out the reaction D-serine(in) + L-alanine(out) + Na(+)(out) = D-serine(out) + L-alanine(in) + Na(+)(in). It catalyses the reaction nitrate(in) = nitrate(out). The enzyme catalyses iodide(out) = iodide(in). The catalysed reaction is thiocyanate(in) = thiocyanate(out). In terms of biological role, sodium-coupled antiporter of neutral amino acids. In a tri-substrate transport cycle, exchanges neutral amino acids between the extracellular and intracellular compartments, coupled to the inward cotransport of at least one sodium ion. The preferred substrate is the essential amino acid L-glutamine, a precursor for biosynthesis of proteins, nucleotides and amine sugars as well as an alternative fuel for mitochondrial oxidative phosphorylation. Exchanges L-glutamine with other neutral amino acids such as L-serine, L-threonine and L-asparagine in a bidirectional way. Provides L-glutamine to proliferating stem and activated cells driving the metabolic switch toward cell differentiation. The transport cycle is usually pH-independent, with the exception of L-glutamate. Transports extracellular L-glutamate coupled to the cotransport of one proton and one sodium ion in exchange for intracellular L-glutamine counter-ion. May provide for L-glutamate uptake in glial cells regulating glutamine/glutamate cycle in the nervous system. Can transport D-amino acids. Mediates D-serine release from the retinal glia potentially affecting NMDA receptor function in retinal neurons. Displays sodium- and amino acid-dependent but uncoupled channel-like anion conductance with a preference SCN(-) &gt;&gt; NO3(-) &gt; I(-) &gt; Cl(-). Through binding of the fusogenic protein syncytin-1/ERVW-1 may mediate trophoblasts syncytialization, the spontaneous fusion of their plasma membranes, an essential process in placental development. The sequence is that of Neutral amino acid transporter B(0) (SLC1A5) from Macaca fascicularis (Crab-eating macaque).